A 444-amino-acid chain; its full sequence is Endoglucanase N (444 aa).

Positions 1–31 (MWMRRNQIVRKLTLGVVTTVLGMSLSFSALS) are cleaved as a signal peptide. Substrate contacts are provided by residues H64, 68-69 (WF), Y95, and H130. E168 functions as the Proton donor in the catalytic mechanism. Y230 is a substrate binding site. E256 acts as the Nucleophile in catalysis. Substrate contacts are provided by residues 262-263 (AS), W290, and 295-297 (KSE). Residues 332–358 (ANLGGGDTPTTPTTPTEPTNPGNGTTG) are disordered. The span at 339–358 (TPTTPTTPTEPTNPGNGTTG) shows a compositional bias: low complexity. The CBM3 domain maps to 356-444 (TTGDVVLQYR…DKANRYVLVT (89 aa)).

The protein belongs to the glycosyl hydrolase 5 (cellulase A) family.

The protein localises to the secreted. It carries out the reaction Endohydrolysis of (1-&gt;4)-beta-D-glucosidic linkages in cellulose, lichenin and cereal beta-D-glucans.. The polypeptide is Endoglucanase N (celN) (Pectobacterium atrosepticum (Erwinia carotovora subsp. atroseptica)).